Here is a 467-residue protein sequence, read N- to C-terminus: Solute carrier family 52, riboflavin transporter, member 3 (467 aa).

Residues Met1–Ala2 are Cytoplasmic-facing. A helical transmembrane segment spans residues Phe3–Leu23. Over Trp24–Tyr43 the chain is Extracellular. A helical transmembrane segment spans residues Leu44–Phe64. The Cytoplasmic segment spans residues Arg65–Glu71. A helical transmembrane segment spans residues Val72–Leu92. Residues Trp93–Ser105 lie on the Extracellular side of the membrane. N-linked (GlcNAc...) asparagine glycosylation is present at Asn94. Residues Ile106–Phe126 traverse the membrane as a helical segment. Residues Leu127–Tyr137 are Cytoplasmic-facing. A helical transmembrane segment spans residues Leu138–Ala158. At Gln159–Pro220 the chain is on the extracellular side. Asn168 carries N-linked (GlcNAc...) asparagine glycosylation. Residues Leu221–Leu241 traverse the membrane as a helical segment. The Cytoplasmic portion of the chain corresponds to Gln242–His294. Ser251 is modified (phosphoserine). Positions Arg266–Glu288 are disordered. The span at Gln268–Glu288 shows a compositional bias: basic and acidic residues. Residues Leu295–Val315 traverse the membrane as a helical segment. At Leu316–His333 the chain is on the extracellular side. The helical transmembrane segment at Leu334–Pro354 threads the bilayer. Over Asn355 to Pro359 the chain is Cytoplasmic. The chain crosses the membrane as a helical span at residues Phe360–Val380. Topologically, residues Met381–Glu394 are extracellular. The chain crosses the membrane as a helical span at residues Val395–Leu415. Over Gly416 to Ser425 the chain is Cytoplasmic. The helical transmembrane segment at Ala426 to Phe446 threads the bilayer. At Pro447–Ala467 the chain is on the extracellular side.

It belongs to the riboflavin transporter family.

The protein localises to the cell membrane. The catalysed reaction is riboflavin(in) = riboflavin(out). In terms of biological role, plasma membrane transporter mediating the uptake by cells of the water soluble vitamin B2/riboflavin that plays a key role in biochemical oxidation-reduction reactions of the carbohydrate, lipid, and amino acid metabolism. The protein is Solute carrier family 52, riboflavin transporter, member 3 (SLC52A3) of Bos taurus (Bovine).